We begin with the raw amino-acid sequence, 64 residues long: Phylloxin-S1 (64 aa).

The N-terminal stretch at 1–22 is a signal peptide; the sequence is MVFLKKSLLLVLFVGLVSLSIC. Positions 23-44 are excised as a propeptide; the sequence is EENKREEHEEVEENAEKAEEKR. Glutamine 63 carries the glutamine amide modification.

Expressed by the skin glands.

Its subcellular location is the secreted. Functionally, antimicrobial peptide against both Gram-positive and Gram-negative bacteria. The sequence is that of Phylloxin-S1 from Phyllomedusa sauvagei (Sauvage's leaf frog).